The following is a 553-amino-acid chain: Cytokine-like nuclear factor N-PAC (553 aa).

Residues 8–66 enclose the PWWP domain; the sequence is LGDLVWGKLGRYPPWPGKIVNPPKDLKKPRGKKCFFVKFFGTEDHAWIKVEQLKPYHAH. Basic and acidic residues-rich tracts occupy residues 92 to 145 and 162 to 182; these read RAKG…EGKK and RAQE…KDLT. Positions 92-188 are disordered; that stretch reads RAKGKDQTSS…KDLTIPESST (97 aa). Ser-130 is subject to Phosphoserine. Lys-135 is covalently cross-linked (Glycyl lysine isopeptide (Lys-Gly) (interchain with G-Cter in SUMO2)). Position 167 is a phosphoserine (Ser-167). A DNA-binding region (a.T hook) is located at residues 168–180; sequence PRKRGRPPKDEKD. Glycyl lysine isopeptide (Lys-Gly) (interchain with G-Cter in SUMO2) cross-links involve residues Lys-176, Lys-179, Lys-201, and Lys-211. An interaction with histone H3 region spans residues 214-217; that stretch reads DPHF. Residues 216–225 are interaction with KDM1B; sequence HFHHFLLSQT. Residues Lys-227, Lys-237, Lys-240, and Lys-269 each participate in a glycyl lysine isopeptide (Lys-Gly) (interchain with G-Cter in SUMO2) cross-link. The interval 261–553 is dehydrogenase domain; sequence GSITPTDKKI…MSAVYRAYIH (293 aa). 271 to 285 is an NAD(+) binding site; it reads GFLGLGLMGSGIVSN. Residue Lys-302 forms a Glycyl lysine isopeptide (Lys-Gly) (interchain with G-Cter in SUMO2) linkage. Residues Thr-362 and Lys-505 each contribute to the NAD(+) site. Position 540 is a phosphoserine (Ser-540).

It belongs to the HIBADH-related family. NP60 subfamily. In terms of assembly, homotetramere. Interacts with MAPK14. Interacts with KDM1B at nucleosomes; this interaction stimulates H3K4me1 and H3K4me2 demethylation. Binds to mononucleosomes. Interacts with GATA4; the interaction is required for a synergistic activation of GATA4 target genes transcription.

The protein localises to the nucleus. It localises to the chromosome. Cytokine-like nuclear factor with chromatin gene reader activity involved in chromatin modification and regulation of gene expression. Acts as a nucleosome-destabilizing factor that is recruited to genes during transcriptional activation. Recognizes and binds histone H3 without a preference for specific epigenetic markers and also binds DNA. Interacts with KDM1B and promotes its histone demethylase activity by facilitating the capture of H3 tails, they form a multifunctional enzyme complex that modifies transcribed chromatin and facilitates Pol II transcription through nucleosomes. Stimulates the acetylation of 'Lys-56' of nucleosomal histone H3 (H3K56ac) by EP300. With GATA4, co-binds a defined set of heart development genes and coregulates their expression during cardiomyocyte differentiation. Regulates p38 MAP kinase activity by mediating stress activation of MAPK14/p38alpha and specifically regulating MAPK14 signaling. Indirectly promotes phosphorylation of MAPK14 and activation of ATF2. The phosphorylation of MAPK14 requires upstream activity of MAP2K4 and MAP2K6. The chain is Cytokine-like nuclear factor N-PAC from Homo sapiens (Human).